The following is a 105-amino-acid chain: Molt-inhibiting hormone (105 aa).

The N-terminal stretch at 1-28 (MYRLAMRTWLAIVIVVVGTSLLFDTASA) is a signal peptide. 3 disulfides stabilise this stretch: Cys35-Cys72, Cys52-Cys68, and Cys55-Cys81.

The protein belongs to the arthropod CHH/MIH/GIH/VIH hormone family. As to expression, produced by the medulla terminalis X-organ in the eyestalks and transported to the sinus gland where it is stored and released.

The protein localises to the secreted. Functionally, inhibits Y-organs where molting hormone (ecdysteroid) is secreted. A molting cycle is initiated when MIH secretion diminishes or stops. Has little or no hyperglycemic activity. This is Molt-inhibiting hormone from Penaeus japonicus (Kuruma prawn).